Here is a 1257-residue protein sequence, read N- to C-terminus: Liprin-alpha-2 (1257 aa).

The interval 1-29 (MMCEVMPTINEDTPMSQRGSQSSGSDSDS) is disordered. Low complexity predominate over residues 16–26 (SQRGSQSSGSD). Coiled-coil stretches lie at residues 29 to 154 (SHFE…SLRM) and 185 to 235 (KALD…SSEG). S236 is modified (phosphoserine). T237 bears the Phosphothreonine mark. Position 239 is a phosphoserine (S239). 2 coiled-coil regions span residues 264-541 (TDDT…SLIE) and 643-695 (HSDA…GLNL). The segment at 439–463 (GQLEEKNQELQRARQREKMNEEHNK) is disordered. Phosphoserine is present on residues S687 and S689. Positions 709 to 725 (TASSLASSSPPSGHSTP) are enriched in low complexity. Disordered stretches follow at residues 709 to 738 (TASSLASSSPPSGHSTPKLTPRSPAREMDR) and 759 to 834 (EEDG…KSSI). The segment covering 787–802 (TLPSSYHNDARSSLSA) has biased composition (polar residues). A phosphoserine mark is found at S817 and S820. 3 SAM domains span residues 898 to 964 (WDGP…MVSL), 1020 to 1084 (NHEW…LKRL), and 1108 to 1177 (WSND…LLAL). Positions 1081 to 1107 (LKRLNYDRKELERRREASQHEIKDVLV) form a coiled coil.

It belongs to the liprin family. Liprin-alpha subfamily. As to quaternary structure, forms homodimers and heterodimers with liprins-alpha and liprins-beta. Interacts with the second PTPase domain of PTPRD, PTPRF and PTPRS. Interacts with KIF1A; the interaction decreases in presence of calcium.

The protein localises to the cytoplasm. It is found in the cell surface. The protein resides in the cell projection. Its subcellular location is the dendritic spine. Its function is as follows. Alters PTPRF cellular localization and induces PTPRF clustering. May regulate the disassembly of focal adhesions. May localize receptor-like tyrosine phosphatases type 2A at specific sites on the plasma membrane, possibly regulating their interaction with the extracellular environment and their association with substrates. In neuronal cells, is a scaffolding protein in the dendritic spines which acts as immobile postsynaptic post able to recruit KIF1A-driven dense core vesicles to dendritic spines. The protein is Liprin-alpha-2 (Ppfia2) of Mus musculus (Mouse).